Consider the following 492-residue polypeptide: KAT8 regulatory NSL complex subunit 2 (492 aa).

Lys-78 participates in a covalent cross-link: Glycyl lysine isopeptide (Lys-Gly) (interchain with G-Cter in SUMO2). A disordered region spans residues 127–182; the sequence is LGSQTPESSRSEASRILDEDSWSDGEQEPITVDQTWRGDPDSEADSIDSDQEDPLK. A Phosphothreonine modification is found at Thr-131. Over residues 135–144 the composition is skewed to basic and acidic residues; that stretch reads SRSEASRILD. 5 positions are modified to phosphoserine: Ser-147, Ser-149, Ser-168, Ser-172, and Ser-175. The segment covering 167–178 has biased composition (acidic residues); that stretch reads DSEADSIDSDQE. Residues 308–364 form a required for interaction with other NSL complex members region; the sequence is DVRCSNQSLPMTRHCLTHICQDTNQVLFKCCQGSEEVPCNKPVPVSLSEDPCCPLHF. The segment at 455–492 is disordered; it reads AGDGCRSQGSRNSEKGSAPLSQSGLATANGKPEPTSIS.

Component of the NSL complex at least composed of KAT8/MOF, KANSL1, KANSL2, KANSL3, MCRS1, PHF20, OGT1/OGT, WDR5 and HCFC1.

The protein resides in the nucleus. Its subcellular location is the mitochondrion. Its function is as follows. Non-catalytic component of the NSL histone acetyltransferase complex, a multiprotein complex that mediates histone H4 acetylation at 'Lys-5'- and 'Lys-8' (H4K5ac and H4K8ac) at transcription start sites and promotes transcription initiation. Required for NSL complex stability and for transcription of intraciliary transport genes in both ciliated and non-ciliated cells by regulating histone H4 acetylation at 'Lys-5'- and 'Lys-12' (H4K5ac and H4K12ac). This is necessary for cilium assembly in ciliated cells and for organization of the microtubule cytoskeleton in non-ciliated cells. Required within the NSL complex to maintain nuclear architecture stability by promoting KAT8-mediated acetylation of lamin LMNA. The polypeptide is KAT8 regulatory NSL complex subunit 2 (KANSL2) (Pongo abelii (Sumatran orangutan)).